A 251-amino-acid chain; its full sequence is MTRLTVLALLAGLLASSRAGSSPLLDIVGGRKARPRQFPFLASIQNQGRHFCGGALIHARFVMTAASCFQSQNPGVSTVVLGAYDLRRRERQSRQTFSISSMSENGYDPQQNLNDLMLLQLDREANLTSSVTILPLPLQNATVEAGTRCQVAGWGSQRSGGRLSRFPRFVNVTVTPEDQCRPNNVCTGVLTRRGGICNGDGGTPLVCEGLAHGVASFSLGPCGRGPDFFTRVALFRDWIDGVLNNPGPGPA.

The signal sequence occupies residues 1–19; the sequence is MTRLTVLALLAGLLASSRA. Residues 20 to 26 constitute a propeptide, removed in mature form; the sequence is GSSPLLD. Residues 25–26 constitute a propeptide, dipeptide found in non-mature form; the sequence is LD. In terms of domain architecture, Peptidase S1 spans 27-244; it reads IVGGRKARPR…FRDWIDGVLN (218 aa). Positions 46-70 are possesses antibiotic activity; sequence NQGRHFCGGALIHARFVMTAASCFQ. A disulfide bridge links cysteine 52 with cysteine 68. Asparagine 126 is a glycosylation site (N-linked (GlcNAc...) asparagine; partial). Residue asparagine 140 is glycosylated (N-linked (GlcNAc...) asparagine). 3 disulfides stabilise this stretch: cysteine 149–cysteine 207, cysteine 180–cysteine 186, and cysteine 197–cysteine 222. N-linked (GlcNAc...) asparagine; partial glycosylation is present at asparagine 171. The propeptide at 249-251 is removed in mature form; sequence GPA.

This sequence belongs to the peptidase S1 family. Elastase subfamily. In terms of processing, cleavage of the N-terminal propeptide which is composed of 7 amino acids occurs in two steps. The initial cleavage of 5 amino acids is followed by the cleavage of a dipeptide to produce the mature form.

It localises to the cytoplasmic granule membrane. Functionally, this is a neutrophil granule-derived antibacterial and monocyte- and fibroblast-specific chemotactic glycoprotein. Binds heparin. The cytotoxic action is limited to many species of Gram-negative bacteria; this specificity may be explained by a strong affinity of the very basic N-terminal half for the negatively charged lipopolysaccharides that are unique to the Gram-negative bacterial outer envelope. It may play a role in mediating recruitment of monocytes in the second wave of inflammation. Has antibacterial activity against the Gram-negative bacterium P.aeruginosa, this activity is inhibited by LPS from P.aeruginosa. Acting alone, it does not have antimicrobial activity against the Gram-negative bacteria A.actinomycetemcomitans ATCC 29532, A.actinomycetemcomitans NCTC 9709, A.actinomycetemcomitans FDC-Y4, H.aphrophilus ATCC 13252, E.corrodens ATCC 23834, C.sputigena ATCC 33123, Capnocytophaga sp ATCC 33124, Capnocytophaga sp ATCC 27872 or E.coli ML-35. Has antibacterial activity against C.sputigena ATCC 33123 when acting synergistically with either elastase or cathepsin G. In Homo sapiens (Human), this protein is Azurocidin.